We begin with the raw amino-acid sequence, 765 residues long: Protein transport protein Sec23A (765 aa).

Position 2 is an N-acetylthreonine (Thr-2). The Zn(2+) site is built by Cys-61, Cys-66, Cys-85, and Cys-88. Thr-308 carries the phosphothreonine modification. The stretch at 632 to 718 (PEPVLLDSSS…EHGGSQARFL (87 aa)) is one Gelsolin-like repeat.

This sequence belongs to the SEC23/SEC24 family. SEC23 subfamily. In terms of assembly, COPII is composed of at least five proteins: the Sec23/24 complex, the Sec13/31 complex and Sar1. Interacts with SEC23IP. Interacts with HTR4. Interacts with SEC16A. Interacts with SLC6A4. Interacts (as part of the Sec23/24 complex) with SEC22B; recruits SEC22B into COPII-coated vesicles and allows the transport of this cargo from the endoplasmic reticulum to the Golgi. Interacts (via Gelsolin-like repeat) with MIA2 and MIA3; specifically involved in the transport of large cargos like the collagen COL7A1. Interacts with DDHD1. Interacts with TMEM39A. Interacts with SACM1L; this interaction is reduced in the absence of TMEM39A. Interacts with kinase FAM20C; transport of FAM20C from the endoplasmic reticulum to the Golgi is likely to be mediated by COPII vesicles. High levels in brain and fibroblasts.

The protein resides in the cytoplasmic vesicle. Its subcellular location is the COPII-coated vesicle membrane. The protein localises to the endoplasmic reticulum membrane. It is found in the cytoplasm. It localises to the cytosol. Its function is as follows. Component of the coat protein complex II (COPII) which promotes the formation of transport vesicles from the endoplasmic reticulum (ER). The coat has two main functions, the physical deformation of the endoplasmic reticulum membrane into vesicles and the selection of cargo molecules for their transport to the Golgi complex. Required for the translocation of insulin-induced glucose transporter SLC2A4/GLUT4 to the cell membrane. This Mus musculus (Mouse) protein is Protein transport protein Sec23A.